The chain runs to 619 residues: Chaperone protein DnaK (619 aa).

Thr175 is modified (phosphothreonine; by autocatalysis). The disordered stretch occupies residues 578-619 (NGGAQGEGFDPNNMGGANAGTGAANSNDDNVVDADFEVQDDK). Positions 589-606 (NNMGGANAGTGAANSNDD) are enriched in low complexity. Residues 607-619 (NVVDADFEVQDDK) show a composition bias toward acidic residues.

This sequence belongs to the heat shock protein 70 family.

In terms of biological role, acts as a chaperone. The chain is Chaperone protein DnaK from Clostridium perfringens (strain SM101 / Type A).